The primary structure comprises 363 residues: Aminomethyltransferase (363 aa).

It belongs to the GcvT family. As to quaternary structure, the glycine cleavage system is composed of four proteins: P, T, L and H.

It catalyses the reaction N(6)-[(R)-S(8)-aminomethyldihydrolipoyl]-L-lysyl-[protein] + (6S)-5,6,7,8-tetrahydrofolate = N(6)-[(R)-dihydrolipoyl]-L-lysyl-[protein] + (6R)-5,10-methylene-5,6,7,8-tetrahydrofolate + NH4(+). Its function is as follows. The glycine cleavage system catalyzes the degradation of glycine. In Staphylococcus epidermidis (strain ATCC 35984 / DSM 28319 / BCRC 17069 / CCUG 31568 / BM 3577 / RP62A), this protein is Aminomethyltransferase.